The chain runs to 149 residues: NADH-quinone oxidoreductase subunit I 1 (149 aa).

4Fe-4S ferredoxin-type domains follow at residues 51–82 (LKSF…VQGT) and 93–122 (THYV…YSTE). 8 residues coordinate [4Fe-4S] cluster: C62, C65, C68, C72, C102, C105, C108, and C112.

This sequence belongs to the complex I 23 kDa subunit family. In terms of assembly, NDH-1 is composed of 14 different subunits. Subunits NuoA, H, J, K, L, M, N constitute the membrane sector of the complex. [4Fe-4S] cluster serves as cofactor.

The protein localises to the cell inner membrane. The catalysed reaction is a quinone + NADH + 5 H(+)(in) = a quinol + NAD(+) + 4 H(+)(out). Functionally, NDH-1 shuttles electrons from NADH, via FMN and iron-sulfur (Fe-S) centers, to quinones in the respiratory chain. The immediate electron acceptor for the enzyme in this species is believed to be ubiquinone. Couples the redox reaction to proton translocation (for every two electrons transferred, four hydrogen ions are translocated across the cytoplasmic membrane), and thus conserves the redox energy in a proton gradient. The chain is NADH-quinone oxidoreductase subunit I 1 from Syntrophobacter fumaroxidans (strain DSM 10017 / MPOB).